The sequence spans 785 residues: Potassium transporter 5 (785 aa).

Residues 1-60 (MDGEEHQIDGDEVNNHENKLNEKKKSWGKLYRPDSFIIEAGQTPTNTGRRSLMSWRTTMS) lie on the Cytoplasmic side of the membrane. Ser35 is modified (phosphoserine). The helical transmembrane segment at 61 to 81 (LAFQSLGVVYGDIGTSPLYVY) threads the bilayer. At 82-97 (ASTFTDGINDKDDVVG) the chain is on the extracellular side. A helical transmembrane segment spans residues 98–118 (VLSLIIYTITLVALLKYVFIV). Residues 119–184 (LQANDNGEGG…EKLENSKFAK (66 aa)) are Cytoplasmic-facing. A helical membrane pass occupies residues 185–205 (IILFLVTIMGTSMVIGDGILT). The Extracellular segment spans residues 206 to 218 (PSISVLSAVSGIK). A helical transmembrane segment spans residues 219 to 239 (SLGQNTVVGVSVAILIVLFAF). The Cytoplasmic portion of the chain corresponds to 240–247 (QRFGTDKV). Residues 248–268 (GFSFAPIILVWFTFLIGIGLF) form a helical membrane-spanning segment. The Extracellular portion of the chain corresponds to 269-297 (NLFKHDITVLKALNPLYIIYYFRRTGRQG). Residues 298-318 (WISLGGVFLCITGTEAMFADL) traverse the membrane as a helical segment. The Cytoplasmic segment spans residues 319–327 (GHFSVRAVQ). The helical transmembrane segment at 328–348 (ISFSCVAYPALVTIYCGQAAY) threads the bilayer. At 349–367 (LTKHTYNVSNTFYDSIPDP) the chain is on the extracellular side. Asn355 carries an N-linked (GlcNAc...) asparagine glycan. The helical transmembrane segment at 368–388 (LYWPTFVVAVAASIIASQAMI) threads the bilayer. The Cytoplasmic portion of the chain corresponds to 389-419 (SGAFSVISQSLRMGCFPRVKVVHTSAKYEGQ). Residues 420–440 (VYIPEINYLLMLACIAVTLAF) traverse the membrane as a helical segment. Topologically, residues 441–451 (RTTEKIGHAYG) are extracellular. A helical membrane pass occupies residues 452–472 (IAVVTVMVITTLMVTLIMLVI). Residues 473–476 (WKTN) lie on the Cytoplasmic side of the membrane. The helical transmembrane segment at 477–497 (IVWIAIFLVVFGSIEMLYLSS) threads the bilayer. Over 498–501 (VMYK) the chain is Extracellular. Residues 502–522 (FTSGGYLPLTITVVLMAMMAI) form a helical membrane-spanning segment. The Cytoplasmic portion of the chain corresponds to 523-785 (WQYVHVLKYR…LLKVGMTYEL (263 aa)). Positions 660-699 (GGEVDETDKEEEPNAETTVVPSSNYVPSSGRIGSAHSSSS) are disordered. Acidic residues predominate over residues 662 to 673 (EVDETDKEEEPN). The span at 674-686 (AETTVVPSSNYVP) shows a compositional bias: polar residues. A compositionally biased stretch (low complexity) spans 687 to 697 (SSGRIGSAHSS).

Belongs to the HAK/KUP transporter (TC 2.A.72.3) family. Interacts with ILK1. Post-translationally, phosphorylated at the N-terminus (amino acids 1-95) by CIPK23. Predominantly expressed in the roots.

The protein localises to the cell membrane. Functionally, high-affinity potassium transporter. Can also transport rubidium and cesium. Is essential with AKT1 for high-affinity potassium uptake in roots during seedling establishment and postgermination growth under low potassium conditions. Mediates potassium uptake by plant roots in response to low potassium conditions, by a calcium-, CBL-, and CIPK-dependent pathway. Positively regulated by the calcium sensors calcineurin B-like genes CBL1, CBL8, CBL9 and CBL10, and by phosphorylation by CIPK23. The chain is Potassium transporter 5 (POT5) from Arabidopsis thaliana (Mouse-ear cress).